The sequence spans 500 residues: NAD(P)H-quinone oxidoreductase chain 4, chloroplastic (500 aa).

The next 13 helical transmembrane spans lie at Phe-4–Leu-24, Tyr-35–Phe-55, Ile-87–Val-107, Leu-134–Met-154, Phe-167–Leu-187, Val-208–Ile-228, His-242–Ile-262, Ala-272–Ala-292, Ile-305–Asp-325, Gly-330–Gly-350, Leu-386–Thr-406, Leu-411–Ile-431, and Leu-462–Val-482.

Belongs to the complex I subunit 4 family.

The protein resides in the plastid. It is found in the chloroplast thylakoid membrane. It carries out the reaction a plastoquinone + NADH + (n+1) H(+)(in) = a plastoquinol + NAD(+) + n H(+)(out). It catalyses the reaction a plastoquinone + NADPH + (n+1) H(+)(in) = a plastoquinol + NADP(+) + n H(+)(out). This is NAD(P)H-quinone oxidoreductase chain 4, chloroplastic from Solanum tuberosum (Potato).